A 470-amino-acid polypeptide reads, in one-letter code: MPIRALCTICSDFFDHSRDVAAIHCGHTFHLQCLIQWFETAPSRTCPQCRIQVGKKTIINKLFFDLAQEEENVLDAEFLKNELDSVKAQLSQKDREKRDSQAIIDTLRDTLEERNATVESLQNALNKAEMLCSTLKKQMKFLEQRQDETKQAREEAHRLKCKMKTMEQIELLLQSQRSEVEEMIRDMGVGQSAVEQLAVYCVSLKKEYENLKEARKATGELADRLKKDLVSSRSKLKTLNTELDQAKLELRSAQKDLQSADQEITSLRKKLMILQGTLSLPPATNETVSRLVFESPAPVEMMNPRLHQPPFGDEIDLNTTFDVNTPPTQTSGSQHCLPKKLCLERARSPMQNVLKKVHKVSKPESQLSLGGQRCVGELDEELAGAFPLFIRNAVLGQKQPNRTTAESRCSTDVVRIGFDGLGGRTKFIQPRDTTIIRPVPVKSKAKSKQKVRIKTVSSASQPKLDTFLCQ.

The RING-type; atypical zinc-finger motif lies at 7–50 (CTICSDFFDHSRDVAAIHCGHTFHLQCLIQWFETAPSRTCPQCR). A coiled-coil region spans residues 76–277 (AEFLKNELDS…RKKLMILQGT (202 aa)). Residues 211–470 (LKEARKATGE…QPKLDTFLCQ (260 aa)) form an interaction with CYLD region. The PIP-box signature appears at 461 to 470 (QPKLDTFLCQ).

It belongs to the TRAIP family. As to quaternary structure, interacts (via PIP-box) with PCNA. Binds TRAF1, TRAF2, TRAF3, TRAF5 and TRAF6 is part of the receptor-TRAF signaling complex. May interact with CYLD; the C-terminus interacts with CYLD, however the interaction was not detected with the full-length protein. Interacts with POLK and POLN. Interacts with UIMC1. In terms of processing, autoubiquitinated. Sumoylated; sumoylation is required for nuclear localization. Sumoylation increases protein stability, possibly by preventing ubiquitination. As to expression, detected in testis and thymus, and at lower levels in spleen.

Its subcellular location is the nucleus. It localises to the nucleoplasm. The protein resides in the nucleolus. It is found in the chromosome. The protein localises to the cytoplasm. Its subcellular location is the perinuclear region. The enzyme catalyses S-ubiquitinyl-[E2 ubiquitin-conjugating enzyme]-L-cysteine + [acceptor protein]-L-lysine = [E2 ubiquitin-conjugating enzyme]-L-cysteine + N(6)-ubiquitinyl-[acceptor protein]-L-lysine.. It participates in protein modification; protein ubiquitination. Its function is as follows. E3 ubiquitin ligase required to protect genome stability in response to replication stress. Acts as a key regulator of interstrand cross-link repair, which takes place when both strands of duplex DNA are covalently tethered together, thereby blocking replication and transcription. During mitosis, controls the choice between the two pathways of replication-coupled interstrand-cross-link repair by mediating ubiquitination of MCM7 subunit of the CMG helicase complex. Short ubiquitin chains on MCM7 promote recruitment of DNA glycosylase NEIL3. If the interstrand cross-link cannot be cleaved by NEIL3, the ubiquitin chains continue to grow on MCM7, promoting the unloading of the CMG helicase complex by the VCP/p97 ATPase, enabling the Fanconi anemia DNA repair pathway. Only catalyzes ubiquitination of MCM7 when forks converge. Also involved in the repair of covalent DNA-protein cross-links (DPCs) during DNA synthesis: promotes ubiquitination of DPCs, leading to their degradation by the proteasome. Has also been proposed to play a role in promoting translesion synthesis by mediating the assembly of 'Lys-63'-linked poly-ubiquitin chains on the Y-family polymerase POLN in order to facilitate bypass of DNA lesions and preserve genomic integrity. The function in translesion synthesis is however controversial. Acts as a regulator of the spindle assembly checkpoint. Also acts as a negative regulator of innate immune signaling by inhibiting activation of NF-kappa-B mediated by TNF. Negatively regulates TLR3/4- and RIG-I-mediated IRF3 activation and subsequent IFNB1 production and cellular antiviral response by promoting 'Lys-48'-linked polyubiquitination of TNK1 leading to its proteasomal degradation. In Mus musculus (Mouse), this protein is E3 ubiquitin-protein ligase TRAIP.